We begin with the raw amino-acid sequence, 464 residues long: Argininosuccinate lyase (464 aa).

This sequence belongs to the lyase 1 family. Argininosuccinate lyase subfamily.

The protein localises to the cytoplasm. The enzyme catalyses 2-(N(omega)-L-arginino)succinate = fumarate + L-arginine. Its pathway is amino-acid biosynthesis; L-arginine biosynthesis; L-arginine from L-ornithine and carbamoyl phosphate: step 3/3. The polypeptide is Argininosuccinate lyase (Pseudomonas entomophila (strain L48)).